We begin with the raw amino-acid sequence, 222 residues long: UPF0173 metal-dependent hydrolase Kcr_0055 (222 aa).

This sequence belongs to the UPF0173 family.

This Korarchaeum cryptofilum (strain OPF8) protein is UPF0173 metal-dependent hydrolase Kcr_0055.